Consider the following 662-residue polypeptide: UvrABC system protein B (662 aa).

Residues 25-182 (KGIEKGEKFQ…KKLVEIQYER (158 aa)) form the Helicase ATP-binding domain. 38-45 (GVTGSGKT) is a binding site for ATP. Positions 91-114 (YYDYYQPEAYVAQSDTYIEKDASI) match the Beta-hairpin motif. One can recognise a Helicase C-terminal domain in the interval 429 to 595 (QIDDLYTSIQ…TIIKDIREVI (167 aa)). Positions 622-657 (DKLIEKYEEEMKEAAQNLQFEKAAHLRDVIYKLKRD) constitute a UVR domain.

The protein belongs to the UvrB family. Forms a heterotetramer with UvrA during the search for lesions. Interacts with UvrC in an incision complex.

Its subcellular location is the cytoplasm. Functionally, the UvrABC repair system catalyzes the recognition and processing of DNA lesions. A damage recognition complex composed of 2 UvrA and 2 UvrB subunits scans DNA for abnormalities. Upon binding of the UvrA(2)B(2) complex to a putative damaged site, the DNA wraps around one UvrB monomer. DNA wrap is dependent on ATP binding by UvrB and probably causes local melting of the DNA helix, facilitating insertion of UvrB beta-hairpin between the DNA strands. Then UvrB probes one DNA strand for the presence of a lesion. If a lesion is found the UvrA subunits dissociate and the UvrB-DNA preincision complex is formed. This complex is subsequently bound by UvrC and the second UvrB is released. If no lesion is found, the DNA wraps around the other UvrB subunit that will check the other stand for damage. This chain is UvrABC system protein B, found in Clostridium botulinum (strain Loch Maree / Type A3).